Consider the following 264-residue polypeptide: Ribonuclease HII (264 aa).

An RNase H type-2 domain is found at 69–263 (KVVCGIDEVG…EENAKTITKP (195 aa)). Residues Asp75, Glu76, and Asp166 each coordinate a divalent metal cation.

The protein belongs to the RNase HII family. Mn(2+) serves as cofactor. Requires Mg(2+) as cofactor.

It localises to the cytoplasm. The enzyme catalyses Endonucleolytic cleavage to 5'-phosphomonoester.. Its function is as follows. Endonuclease that specifically degrades the RNA of RNA-DNA hybrids. The polypeptide is Ribonuclease HII (Macrococcus caseolyticus (strain JCSC5402) (Macrococcoides caseolyticum)).